Reading from the N-terminus, the 187-residue chain is Elongation factor P (187 aa).

It belongs to the elongation factor P family.

Its subcellular location is the cytoplasm. It functions in the pathway protein biosynthesis; polypeptide chain elongation. Involved in peptide bond synthesis. Stimulates efficient translation and peptide-bond synthesis on native or reconstituted 70S ribosomes in vitro. Probably functions indirectly by altering the affinity of the ribosome for aminoacyl-tRNA, thus increasing their reactivity as acceptors for peptidyl transferase. This Roseiflexus sp. (strain RS-1) protein is Elongation factor P.